Reading from the N-terminus, the 362-residue chain is 3-dehydroquinate synthase (362 aa).

NAD(+) is bound by residues 71–76, 105–109, 129–130, Lys-142, Lys-151, and 169–172; these read DGEQYK, GVIGD, TT, and CLKT. Zn(2+) contacts are provided by Glu-184, His-247, and His-264.

This sequence belongs to the sugar phosphate cyclases superfamily. Dehydroquinate synthase family. Co(2+) serves as cofactor. Requires Zn(2+) as cofactor. NAD(+) is required as a cofactor.

The protein resides in the cytoplasm. It carries out the reaction 7-phospho-2-dehydro-3-deoxy-D-arabino-heptonate = 3-dehydroquinate + phosphate. It functions in the pathway metabolic intermediate biosynthesis; chorismate biosynthesis; chorismate from D-erythrose 4-phosphate and phosphoenolpyruvate: step 2/7. Catalyzes the conversion of 3-deoxy-D-arabino-heptulosonate 7-phosphate (DAHP) to dehydroquinate (DHQ). The protein is 3-dehydroquinate synthase of Salmonella agona (strain SL483).